The following is a 367-amino-acid chain: Spermidine/putrescine import ATP-binding protein PotA (367 aa).

An ABC transporter domain is found at 10–240 (IEFKNVSLDY…PINHFVANFI (231 aa)). 42–49 (GPSGSGKS) is an ATP binding site.

Belongs to the ABC transporter superfamily. Spermidine/putrescine importer (TC 3.A.1.11.1) family. The complex is composed of two ATP-binding proteins (PotA), two transmembrane proteins (PotB and PotC) and a solute-binding protein (PotD).

It is found in the cell membrane. It catalyses the reaction ATP + H2O + polyamine-[polyamine-binding protein]Side 1 = ADP + phosphate + polyamineSide 2 + [polyamine-binding protein]Side 1.. Part of the ABC transporter complex PotABCD involved in spermidine/putrescine import. Responsible for energy coupling to the transport system. In Oenococcus oeni (strain ATCC BAA-331 / PSU-1), this protein is Spermidine/putrescine import ATP-binding protein PotA.